Reading from the N-terminus, the 289-residue chain is Stress response regulator protein 1 (289 aa).

The segment at 77-136 is disordered; sequence LDCTNSEMDEEDDFEDDEDDENLGLINPLHHKSSHGQISDYSPLTPFTEPPSASLSKPSF. The segment covering 83 to 98 has biased composition (acidic residues); it reads EMDEEDDFEDDEDDEN. Positions 127–136 are enriched in polar residues; the sequence is PSASLSKPSF. The 119-residue stretch at 163 to 281 folds into the Response regulatory domain; it reads NFLIVDDNII…YDFVMDRIDE (119 aa). At D214 the chain carries 4-aspartylphosphate.

In terms of biological role, required for stress adaptation, morphogenesis and virulence. This chain is Stress response regulator protein 1 (SRR1), found in Scheffersomyces stipitis (strain ATCC 58785 / CBS 6054 / NBRC 10063 / NRRL Y-11545) (Yeast).